We begin with the raw amino-acid sequence, 85 residues long: Conotoxin Lt28.2 (85 aa).

Residues 1-21 form the signal peptide; sequence MPKLEMMLLVLLILPLCYIDA. Positions 22–40 are excised as a propeptide; that stretch reads VGPPPPWNMEDEIIEHWQK.

This sequence belongs to the conotoxin D superfamily. Post-translationally, contains 5 disulfide bonds. Expressed by the venom duct.

Its subcellular location is the secreted. In terms of biological role, probable neurotoxin. The polypeptide is Conotoxin Lt28.2 (Conus litteratus (Lettered cone)).